Consider the following 917-residue polypeptide: von Willebrand factor A domain-containing protein DDB_G0285975 (917 aa).

The segment at 12-51 (DTTTTTTPTTPTTPTTPTTTPTTTTTPTTTPTTTTTSTTP) is disordered. Positions 13-51 (TTTTTTPTTPTTPTTPTTTPTTTTTPTTTPTTTTTSTTP) are enriched in low complexity. Residues 87–215 (RYNTGLKNIS…NVTIHLTIIS (129 aa)) form the VIT domain. A VWFA domain is found at 339–507 (EFIFLIDCSG…NFEEQVMKLV (169 aa)). The region spanning 679–741 (LFSSENRNQT…INSIPQKSNI (63 aa)) is the t-SNARE coiled-coil homology domain. Low complexity-rich tracts occupy residues 751-760 (SPSEVSTSKS) and 774-818 (NNNN…NNNN). The tract at residues 751–822 (SPSEVSTSKS…NNNNNNSDNS (72 aa)) is disordered.

In Dictyostelium discoideum (Social amoeba), this protein is von Willebrand factor A domain-containing protein DDB_G0285975.